Reading from the N-terminus, the 442-residue chain is Trigger factor (442 aa).

Residues 176 to 259 (GDFISLSLYV…VNAVIEISSP (84 aa)) enclose the PPIase FKBP-type domain.

This sequence belongs to the FKBP-type PPIase family. Tig subfamily.

It localises to the cytoplasm. The enzyme catalyses [protein]-peptidylproline (omega=180) = [protein]-peptidylproline (omega=0). Functionally, involved in protein export. Acts as a chaperone by maintaining the newly synthesized protein in an open conformation. Functions as a peptidyl-prolyl cis-trans isomerase. The protein is Trigger factor of Chlamydia trachomatis serovar L2 (strain ATCC VR-902B / DSM 19102 / 434/Bu).